Here is a 132-residue protein sequence, read N- to C-terminus: Small ribosomal subunit protein uS11c (132 aa).

Belongs to the universal ribosomal protein uS11 family. In terms of assembly, part of the 30S ribosomal subunit.

The protein localises to the plastid. It localises to the chloroplast. In Cryptomeria japonica (Japanese cedar), this protein is Small ribosomal subunit protein uS11c.